The sequence spans 475 residues: ATP synthase subunit beta (475 aa).

Residue 155-162 (GGAGVGKT) participates in ATP binding.

Belongs to the ATPase alpha/beta chains family. F-type ATPases have 2 components, CF(1) - the catalytic core - and CF(0) - the membrane proton channel. CF(1) has five subunits: alpha(3), beta(3), gamma(1), delta(1), epsilon(1). CF(0) has three main subunits: a(1), b(2) and c(9-12). The alpha and beta chains form an alternating ring which encloses part of the gamma chain. CF(1) is attached to CF(0) by a central stalk formed by the gamma and epsilon chains, while a peripheral stalk is formed by the delta and b chains.

Its subcellular location is the cell inner membrane. It catalyses the reaction ATP + H2O + 4 H(+)(in) = ADP + phosphate + 5 H(+)(out). Produces ATP from ADP in the presence of a proton gradient across the membrane. The catalytic sites are hosted primarily by the beta subunits. This is ATP synthase subunit beta from Rhizobium etli (strain ATCC 51251 / DSM 11541 / JCM 21823 / NBRC 15573 / CFN 42).